Here is a 196-residue protein sequence, read N- to C-terminus: CASP-like protein 2U1 (196 aa).

The Cytoplasmic segment spans residues 1–11; the sequence is MAPMECVRRRN. Residues 12–32 form a helical membrane-spanning segment; that stretch reads VGELVLRCAATLVCMLSLMLL. Residues 33–58 lie on the Extracellular side of the membrane; sequence VRDQQIAVQEVGVTSVTTQLRYSSST. The helical transmembrane segment at 59–79 threads the bilayer; sequence GLVYLVYANGLVALYCFVVVL. At 80-95 the chain is on the cytoplasmic side; it reads TSSFNGGSVMRRNKSG. The helical transmembrane segment at 96–116 threads the bilayer; sequence AWALFVLDQVLACILLSAASA. Residues 117 to 148 lie on the Extracellular side of the membrane; that stretch reads ASEIAFLVEKGAKKTIWDSKCIVYGHFCRMLE. Residues 149–169 traverse the membrane as a helical segment; that stretch reads VSIATSFIAVIMLGSICVLSA. Topologically, residues 170 to 196 are cytoplasmic; sequence KQLFQQYTHYARIVNMVKLKSTPNSLL.

Belongs to the Casparian strip membrane proteins (CASP) family. Homodimer and heterodimers.

The protein localises to the cell membrane. This is CASP-like protein 2U1 from Pteridium aquilinum subsp. aquilinum (Bracken fern).